The sequence spans 412 residues: 2,3-bisphosphoglycerate-independent phosphoglycerate mutase (412 aa).

Belongs to the BPG-independent phosphoglycerate mutase family. A-PGAM subfamily.

The catalysed reaction is (2R)-2-phosphoglycerate = (2R)-3-phosphoglycerate. Its pathway is carbohydrate degradation; glycolysis; pyruvate from D-glyceraldehyde 3-phosphate: step 3/5. In terms of biological role, catalyzes the interconversion of 2-phosphoglycerate and 3-phosphoglycerate. The protein is 2,3-bisphosphoglycerate-independent phosphoglycerate mutase of Methanobrevibacter smithii (strain ATCC 35061 / DSM 861 / OCM 144 / PS).